The sequence spans 391 residues: Phosphoglycerate kinase (391 aa).

Substrate contacts are provided by residues 23-25 (DFN), R38, 61-64 (HLGK), R117, and R150. ATP contacts are provided by residues K201, G291, E322, and 348–351 (GGDS).

It belongs to the phosphoglycerate kinase family. In terms of assembly, monomer.

Its subcellular location is the cytoplasm. The enzyme catalyses (2R)-3-phosphoglycerate + ATP = (2R)-3-phospho-glyceroyl phosphate + ADP. The protein operates within carbohydrate degradation; glycolysis; pyruvate from D-glyceraldehyde 3-phosphate: step 2/5. In Clostridium beijerinckii (strain ATCC 51743 / NCIMB 8052) (Clostridium acetobutylicum), this protein is Phosphoglycerate kinase.